Here is a 555-residue protein sequence, read N- to C-terminus: GMP synthase [glutamine-hydrolyzing] (555 aa).

In terms of domain architecture, Glutamine amidotransferase type-1 spans 8–234; the sequence is KILVLNFGSQ…AYNICKCKKQ (227 aa). The Nucleophile; for GATase activity role is filled by Cys-89. 4 residues coordinate L-glutamine: Gln-93, Asn-169, Asp-172, and His-208. Residues His-208 and Glu-210 each act as for GATase activity in the active site. The GMPS ATP-PPase domain occupies 235–430; sequence FDPIRYHELE…LNLPEEITNR (196 aa). Position 262–268 (262–268) interacts with ATP; sequence SGGIDST. Residues Arg-336, Gln-476, Lys-547, Ile-552, and Glu-553 each coordinate XMP.

In terms of assembly, homodimer (via the GMPS ATP-PPase domain). Mg(2+) is required as a cofactor.

It catalyses the reaction XMP + L-glutamine + ATP + H2O = GMP + L-glutamate + AMP + diphosphate + 2 H(+). Its pathway is purine metabolism; GMP biosynthesis; GMP from XMP (L-Gln route): step 1/1. The GATase domain is allosterically activated by the binding of substrates, ATP and XMP, to the ATPPase domain, thus ensuring that glutamine hydrolysis occurs only when the ATPPase domain is primed to receive ammonia. Inhibited by Na(+). Inhibited by the reaction product GMP. Catalyzes the conversion of xanthine monophosphate (XMP) to GMP in the presence of glutamine and ATP through an adenyl-XMP intermediate, which is the final step of de novo synthesis of GMP. The conversion of XMP to GMP involves the coordinated action of the glutamine amidotransferase (GATase) domain that catalyzes the hydrolysis of the amide side chain of glutamine producing ammonia and the ATP pyrophosphatase (ATPPase) domain that catalyzes the synthesis of adenyl-XMP intermediate from ATP. The ammonia produced by the GATase domain is tunnelled to the ATP-PPase domain where it attacks the adenyl-XMP intermediate generating GMP. This Plasmodium falciparum (isolate 3D7) protein is GMP synthase [glutamine-hydrolyzing].